The sequence spans 437 residues: Vitellogenin-1 (437 aa).

The signal sequence occupies residues 1-19 (MNPLKIFCFLALVIAVASA). Disordered stretches follow at residues 161–194 (QQQP…ESWK) and 405–437 (PKSP…QNQE). Composition is skewed to polar residues over residues 174–184 (GSSQGNQGATS) and 427–437 (SWKSGKNQNQE).

This sequence belongs to the AB hydrolase superfamily. Lipase family. In terms of tissue distribution, synthesized in the fat body and ovarian follicle cells and accumulate in the oocyte.

Its subcellular location is the secreted. In terms of biological role, vitellogenin is the major yolk protein of eggs where it is used as a food source during embryogenesis. This is Vitellogenin-1 (VG1-GAMMA) from Ceratitis capitata (Mediterranean fruit fly).